A 184-amino-acid polypeptide reads, in one-letter code: MKNITDSFLCLSYWPSAGSFGFDTDILATNLINLSVVLGVLVFFGKGVLTDLLDNRKQRILRTIRNSEELREGAVEQLEKARARLRKIEMEADRFRLNGYSEIEREKLNLINSIYTTLEQFENYKNETINFEQQKAINQVQQRVLQQALQGALGTLNSCLNNELHLRTIGANIGMFGAMKEKNN.

Residues 27–49 traverse the membrane as a helical segment; it reads LATNLINLSVVLGVLVFFGKGVL.

It belongs to the ATPase B chain family. In terms of assembly, F-type ATPases have 2 components, F(1) - the catalytic core - and F(0) - the membrane proton channel. F(1) has five subunits: alpha(3), beta(3), gamma(1), delta(1), epsilon(1). F(0) has four main subunits: a(1), b(1), b'(1) and c(10-14). The alpha and beta chains form an alternating ring which encloses part of the gamma chain. F(1) is attached to F(0) by a central stalk formed by the gamma and epsilon chains, while a peripheral stalk is formed by the delta, b and b' chains.

The protein localises to the plastid. It is found in the chloroplast thylakoid membrane. Functionally, f(1)F(0) ATP synthase produces ATP from ADP in the presence of a proton or sodium gradient. F-type ATPases consist of two structural domains, F(1) containing the extramembraneous catalytic core and F(0) containing the membrane proton channel, linked together by a central stalk and a peripheral stalk. During catalysis, ATP synthesis in the catalytic domain of F(1) is coupled via a rotary mechanism of the central stalk subunits to proton translocation. Component of the F(0) channel, it forms part of the peripheral stalk, linking F(1) to F(0). The sequence is that of ATP synthase subunit b, chloroplastic from Cicer arietinum (Chickpea).